Consider the following 445-residue polypeptide: UPF0210 protein SEQ_0468 (445 aa).

The protein belongs to the UPF0210 family. In terms of assembly, homodimer.

The protein is UPF0210 protein SEQ_0468 of Streptococcus equi subsp. equi (strain 4047).